Consider the following 65-residue polypeptide: Trypsin inhibitor (65 aa).

In terms of assembly, homotrimer.

This Zea mays (Maize) protein is Trypsin inhibitor.